The sequence spans 775 residues: MLTTLARASAMLLGARGFASAADLDKKVEMTNWEKGNYINYKKMAENLDIVRARLNRPLTFAEKILYSHLDDPHGQEIERGKSYLKLRPDRVACQDATAQMAILQFMSAGMPSVATPATVHCDHLIEAQLGGDKDLARANEINKEVYDFLSTSCAKYNIGFWKPGSGIIHQILLENYCFPGGLMIGTDSHTPNGGGLGMAAIGVGGADAVDVMAGLPWELKAPNVIGVKLTGQMSGWTAPKDIILKVAGILTVKGGTGAIIEYHGDGVNSLSCTGMGTICNMGAEIGATTSVFPFNDRMYDYLKATKRQSIGDFSRVYAEGLRPDENAQYDQLIEINLSELEPHINGPFTPDLATPISKFKEAVKENNWPSELKVGLIGSCTNSSYEDMSRAASIARDALNHGIKAKSLFTVTPGSEQIRATIERDGQLKTLEEFGGVILANACGPCIGQWDRKDVKKNEANSIISSYNRNFTGRNDANPATHAFVTSPDLVVALTIAGTLNFNPLTDKLKDKDGNEFMLAPPTGEGLPANGYDPGRDTYQAPPADRASISVAVSPSSDRLQILEPFKAWDGKDAKGIPILIKCEGKTTTDHISMAGPWLKYRGHLDNISNNLLIGAVNAENGERNSVKNFETGEYDSVPATARAYKARGIPWVVIGDWNYGEGSSREHAALQPRHLGGMAIITRSFARIHETNLKKQGMLPLTFADPADYDRIPPTAMVDLMCTELAVGKPMTLRVHPKDGASFDVKLSHTFNESQIEWFKNGSALNTMAKKAQ.

Residues 1–25 constitute a mitochondrion transit peptide; the sequence is MLTTLARASAMLLGARGFASAADLD. Residues Gln95 and 188–190 each bind substrate; that span reads DSH. An N-linked (GlcNAc...) asparagine glycan is attached at Asn337. [4Fe-4S] cluster is bound at residue Cys381. Residue Asn383 is glycosylated (N-linked (GlcNAc...) asparagine). Positions 444 and 447 each coordinate [4Fe-4S] cluster. A substrate-binding site is contributed by Arg470. Asn471 carries N-linked (GlcNAc...) asparagine glycosylation. Positions 475 and 603 each coordinate substrate. Asn608 carries N-linked (GlcNAc...) asparagine glycosylation. A substrate-binding site is contributed by 666–667; the sequence is SR. Asn754 and Asn763 each carry an N-linked (GlcNAc...) asparagine glycan.

It belongs to the aconitase/IPM isomerase family. As to quaternary structure, monomer. Requires [4Fe-4S] cluster as cofactor.

The protein localises to the mitochondrion. It catalyses the reaction citrate = D-threo-isocitrate. It participates in carbohydrate metabolism; tricarboxylic acid cycle; isocitrate from oxaloacetate: step 2/2. Functionally, catalyzes the isomerization of citrate to isocitrate via cis-aconitate. The chain is Aconitate hydratase, mitochondrial from Arthroderma benhamiae (strain ATCC MYA-4681 / CBS 112371) (Trichophyton mentagrophytes).